The sequence spans 374 residues: Putative glutamate--cysteine ligase 2 (374 aa).

Belongs to the glutamate--cysteine ligase type 2 family. YbdK subfamily.

The enzyme catalyses L-cysteine + L-glutamate + ATP = gamma-L-glutamyl-L-cysteine + ADP + phosphate + H(+). Its function is as follows. ATP-dependent carboxylate-amine ligase which exhibits weak glutamate--cysteine ligase activity. In Acidovorax ebreus (strain TPSY) (Diaphorobacter sp. (strain TPSY)), this protein is Putative glutamate--cysteine ligase 2.